The following is a 553-amino-acid chain: Urocanate hydratase (553 aa).

Residues 45 to 46 (GG), glutamine 123, 169 to 171 (GMG), aspartate 189, arginine 194, 235 to 236 (NA), 256 to 260 (QTSAH), 266 to 267 (YV), tyrosine 315, and glycine 485 each bind NAD(+).

It belongs to the urocanase family. NAD(+) serves as cofactor.

Its subcellular location is the cytoplasm. It catalyses the reaction 4-imidazolone-5-propanoate = trans-urocanate + H2O. It participates in amino-acid degradation; L-histidine degradation into L-glutamate; N-formimidoyl-L-glutamate from L-histidine: step 2/3. Its function is as follows. Catalyzes the conversion of urocanate to 4-imidazolone-5-propionate. This is Urocanate hydratase from Staphylococcus aureus (strain MRSA252).